Consider the following 55-residue polypeptide: Large ribosomal subunit protein bL33A (55 aa).

This sequence belongs to the bacterial ribosomal protein bL33 family.

This Mycolicibacterium vanbaalenii (strain DSM 7251 / JCM 13017 / BCRC 16820 / KCTC 9966 / NRRL B-24157 / PYR-1) (Mycobacterium vanbaalenii) protein is Large ribosomal subunit protein bL33A.